The sequence spans 270 residues: Sorting nexin-11 (270 aa).

The PX domain maps to 16 to 132 (VITVRVQDPR…HLFLQSQLSV (117 aa)). A 1,2-diacyl-sn-glycero-3-phospho-(1D-myo-inositol-3-phosphate) is bound by residues arginine 59, lysine 85, and arginine 99. The important for membrane trafficking stretch occupies residues 135–139 (IEACV). The span at 168–177 (GSSHLAEGDQ) shows a compositional bias: basic and acidic residues. Disordered regions lie at residues 168-244 (GSSH…LSAS) and 251-270 (LGGG…VLEK). Pro residues predominate over residues 218–227 (LESPTLPPTS).

Belongs to the sorting nexin family. In terms of assembly, monomer. Interacts with TRPV3; this interaction promotes TRPV3 trafficking from the cell membrane to lysosome for degradation.

The protein localises to the cell membrane. The protein resides in the endosome. Its subcellular location is the cytoplasm. Functionally, phosphoinositide-binding protein involved in protein sorting and membrane trafficking in endosomes. Regulates the levels of TRPV3 by promoting its trafficking from the cell membrane to lysosome for degradation. This chain is Sorting nexin-11 (SNX11), found in Bos taurus (Bovine).